The sequence spans 188 residues: Crossover junction endodeoxyribonuclease RuvC (188 aa).

Catalysis depends on residues D7, E68, and D141. The Mg(2+) site is built by D7, E68, and D141.

This sequence belongs to the RuvC family. Homodimer which binds Holliday junction (HJ) DNA. The HJ becomes 2-fold symmetrical on binding to RuvC with unstacked arms; it has a different conformation from HJ DNA in complex with RuvA. In the full resolvosome a probable DNA-RuvA(4)-RuvB(12)-RuvC(2) complex forms which resolves the HJ. Requires Mg(2+) as cofactor.

It localises to the cytoplasm. The enzyme catalyses Endonucleolytic cleavage at a junction such as a reciprocal single-stranded crossover between two homologous DNA duplexes (Holliday junction).. In terms of biological role, the RuvA-RuvB-RuvC complex processes Holliday junction (HJ) DNA during genetic recombination and DNA repair. Endonuclease that resolves HJ intermediates. Cleaves cruciform DNA by making single-stranded nicks across the HJ at symmetrical positions within the homologous arms, yielding a 5'-phosphate and a 3'-hydroxyl group; requires a central core of homology in the junction. The consensus cleavage sequence is 5'-(A/T)TT(C/G)-3'. Cleavage occurs on the 3'-side of the TT dinucleotide at the point of strand exchange. HJ branch migration catalyzed by RuvA-RuvB allows RuvC to scan DNA until it finds its consensus sequence, where it cleaves and resolves the cruciform DNA. The polypeptide is Crossover junction endodeoxyribonuclease RuvC (Streptomyces coelicolor (strain ATCC BAA-471 / A3(2) / M145)).